A 452-amino-acid chain; its full sequence is Cobyrinate a,c-diamide synthase (452 aa).

Residues 246–439 (TLAYALDDAF…LHVHFYQDEQ (194 aa)) enclose the GATase cobBQ-type domain. The active-site Nucleophile is Cys328.

It belongs to the CobB/CbiA family. Mg(2+) is required as a cofactor.

It catalyses the reaction cob(II)yrinate + 2 L-glutamine + 2 ATP + 2 H2O = cob(II)yrinate a,c diamide + 2 L-glutamate + 2 ADP + 2 phosphate + 2 H(+). It participates in cofactor biosynthesis; adenosylcobalamin biosynthesis; cob(II)yrinate a,c-diamide from sirohydrochlorin (anaerobic route): step 10/10. Its function is as follows. Catalyzes the ATP-dependent amidation of the two carboxylate groups at positions a and c of cobyrinate, using either L-glutamine or ammonia as the nitrogen source. The sequence is that of Cobyrinate a,c-diamide synthase from Streptococcus sanguinis (strain SK36).